The following is an 852-amino-acid chain: Lon protease homolog 2, peroxisomal (852 aa).

Residue Ser2 is modified to N-acetylserine. The region spanning 13 to 222 (LPLLLTHEGV…MTIPLLVRQI (210 aa)) is the Lon N-terminal domain. 375–382 (GPPGVGKT) is an ATP binding site. The Lon proteolytic domain maps to 651–837 (LSQPGVAIGL…DEVLNAAFDG (187 aa)). Catalysis depends on residues Ser743 and Lys786. The short motif at 850–852 (SKL) is the Microbody targeting signal element.

This sequence belongs to the peptidase S16 family. In terms of assembly, interacts with PEX5. Interacts with TYSND1. May interact with enzymes involved in beta-oxidation of fatty acids, including ACOX1/AOX. As to expression, widely expressed, with high levels in the liver, kidney and pancreas.

Its subcellular location is the peroxisome matrix. The catalysed reaction is Hydrolysis of proteins in presence of ATP.. In terms of biological role, ATP-dependent serine protease that mediates the selective degradation of misfolded and unassembled polypeptides in the peroxisomal matrix. Necessary for type 2 peroxisome targeting signal (PTS2)-containing protein processing and facilitates peroxisome matrix protein import. May indirectly regulate peroxisomal fatty acid beta-oxidation through degradation of the self-processed forms of TYSND1. In Homo sapiens (Human), this protein is Lon protease homolog 2, peroxisomal.